The chain runs to 704 residues: Ion-translocating oxidoreductase complex subunit C (704 aa).

4Fe-4S ferredoxin-type domains lie at 368–397 (MGAPQEEKSCIRCSACADACPADLLPQQLY) and 407–436 (KATAHHIADCIECGACAWVCPSNIPLVQYF). [4Fe-4S] cluster is bound by residues Cys377, Cys380, Cys383, Cys387, Cys416, Cys419, Cys422, and Cys426. Residues 536–684 (RAKQAAHPMA…PADPRKAAVA (149 aa)) form a disordered region. Residues 556–565 (KAAVEAAIAR) are compositionally biased toward low complexity.

The protein belongs to the 4Fe4S bacterial-type ferredoxin family. RnfC subfamily. The complex is composed of six subunits: RsxA, RsxB, RsxC, RsxD, RsxE and RsxG. It depends on [4Fe-4S] cluster as a cofactor.

It is found in the cell inner membrane. In terms of biological role, part of a membrane-bound complex that couples electron transfer with translocation of ions across the membrane. Required to maintain the reduced state of SoxR. This is Ion-translocating oxidoreductase complex subunit C from Salmonella choleraesuis (strain SC-B67).